The primary structure comprises 431 residues: Enolase (431 aa).

Q167 lines the (2R)-2-phosphoglycerate pocket. E209 functions as the Proton donor in the catalytic mechanism. Mg(2+) is bound by residues D246, E289, and D316. K341, R370, S371, and K392 together coordinate (2R)-2-phosphoglycerate. Catalysis depends on K341, which acts as the Proton acceptor.

It belongs to the enolase family. In terms of assembly, component of the RNA degradosome, a multiprotein complex involved in RNA processing and mRNA degradation. Requires Mg(2+) as cofactor.

The protein localises to the cytoplasm. Its subcellular location is the secreted. The protein resides in the cell surface. It carries out the reaction (2R)-2-phosphoglycerate = phosphoenolpyruvate + H2O. It functions in the pathway carbohydrate degradation; glycolysis; pyruvate from D-glyceraldehyde 3-phosphate: step 4/5. In terms of biological role, catalyzes the reversible conversion of 2-phosphoglycerate (2-PG) into phosphoenolpyruvate (PEP). It is essential for the degradation of carbohydrates via glycolysis. The sequence is that of Enolase from Shewanella sp. (strain MR-4).